Reading from the N-terminus, the 295-residue chain is MASCMRSLFSDQGRYVESFRRFLNNSTEHQCMQEFMDKKLPGIIARIGEAKAEIKILSVGGGAGEVDLQILSKVQAQYPGICINNEVVEPSAEQIVKYKELVAKTSNMENIKFSWHKETSSEYQKRMLEEEEEPPKWDFIHMIQMLYYVKDIPATLKFFHGLLAASAKILIILVSGTSGWEKLWKKYGSRLPRDDLCQYVTSSDLAQILDDLGIKYECYDLVSTMDITDCFIDGNENGDLLWDFLTETCNFSKTAPLDLKAEIMKDLQEPEFSVKKEGKVLFNNNLSFIVVEANV.

Glu-28 serves as a coordination point for substrate. 5 residues coordinate S-adenosyl-L-methionine: Gly-60, Glu-89, Gln-94, Ser-120, and Ile-143. A substrate-binding site is contributed by Asn-284.

It belongs to the class I-like SAM-binding methyltransferase superfamily. HNMT family. Monomer.

The protein resides in the cytoplasm. It catalyses the reaction histamine + S-adenosyl-L-methionine = N(tau)-methylhistamine + S-adenosyl-L-homocysteine + H(+). Inactivates histamine by N-methylation. Plays an important role in degrading histamine and in regulating the airway response to histamine. In Mus musculus (Mouse), this protein is Histamine N-methyltransferase (Hnmt).